The following is a 234-amino-acid chain: Adenosine 5'-phosphosulfate reductase (234 aa).

Residues C120, C121, C203, and C206 each contribute to the [4Fe-4S] cluster site. C229 (nucleophile; cysteine thiosulfonate intermediate) is an active-site residue.

Belongs to the PAPS reductase family. CysH subfamily. The cofactor is [4Fe-4S] cluster.

Its subcellular location is the cytoplasm. It catalyses the reaction [thioredoxin]-disulfide + sulfite + AMP + 2 H(+) = adenosine 5'-phosphosulfate + [thioredoxin]-dithiol. It functions in the pathway sulfur metabolism; hydrogen sulfide biosynthesis; sulfite from sulfate. Catalyzes the formation of sulfite from adenosine 5'-phosphosulfate (APS) using thioredoxin as an electron donor. This is Adenosine 5'-phosphosulfate reductase from Bacillus thuringiensis subsp. konkukian (strain 97-27).